Reading from the N-terminus, the 303-residue chain is UDP-3-O-acyl-N-acetylglucosamine deacetylase (303 aa).

The Zn(2+) site is built by His78, His237, and Asp241. The active-site Proton donor is His264.

This sequence belongs to the LpxC family. Zn(2+) serves as cofactor.

It carries out the reaction a UDP-3-O-[(3R)-3-hydroxyacyl]-N-acetyl-alpha-D-glucosamine + H2O = a UDP-3-O-[(3R)-3-hydroxyacyl]-alpha-D-glucosamine + acetate. It functions in the pathway glycolipid biosynthesis; lipid IV(A) biosynthesis; lipid IV(A) from (3R)-3-hydroxytetradecanoyl-[acyl-carrier-protein] and UDP-N-acetyl-alpha-D-glucosamine: step 2/6. Functionally, catalyzes the hydrolysis of UDP-3-O-myristoyl-N-acetylglucosamine to form UDP-3-O-myristoylglucosamine and acetate, the committed step in lipid A biosynthesis. This Pseudomonas savastanoi pv. phaseolicola (strain 1448A / Race 6) (Pseudomonas syringae pv. phaseolicola (strain 1448A / Race 6)) protein is UDP-3-O-acyl-N-acetylglucosamine deacetylase.